The following is a 953-amino-acid chain: TPR repeat-containing protein ZIP4 (953 aa).

Residues 129-162 form a TPR 1 repeat; sequence ASFFHRSGLAWLDLGRVDLASACFEKATPLVSAA. The segment at 248-269 is disordered; that stretch reads AASPSSSSPRTPPYGGATPKTP. TPR repeat units lie at residues 432–465 and 473–506; these read HALLWNCGTEHFRAKNYDTSADLIERSMLYVSRD and ADCFRVLSICHIALQHLDRALEFVNEAYKVEPNI. Residues 925 to 953 are disordered; the sequence is VSGDEPDECSQEEAPKASISGSMSQPVLV. Residues 943-953 are compositionally biased toward polar residues; that stretch reads ISGSMSQPVLV.

As to quaternary structure, interacts with HEI10 and SHOC1.

Its subcellular location is the nucleus. The protein resides in the chromosome. Functionally, required for crossover formation, complete synapsis of homologous chromosomes and bivalent formation during meiosis. Is specific to recombination events resulting in interference-sensitive crossovers (class I meiotic crossover) and works cooperatively with MER3 to promote crossovers. The polypeptide is TPR repeat-containing protein ZIP4 (Oryza sativa subsp. japonica (Rice)).